Consider the following 227-residue polypeptide: Protein SSO0193 (227 aa).

An AMMECR1 domain is found at 15–209 (EIGRLLIEIA…ETKPNGSDII (195 aa)).

The chain is Protein SSO0193 from Saccharolobus solfataricus (strain ATCC 35092 / DSM 1617 / JCM 11322 / P2) (Sulfolobus solfataricus).